Here is a 633-residue protein sequence, read N- to C-terminus: Phosphomethylpyrimidine synthase (633 aa).

Positions 1 to 13 are enriched in polar residues; sequence MNIRSNPDTTLPA. The disordered stretch occupies residues 1 to 20; sequence MNIRSNPDTTLPAVTTGPLP. Substrate is bound by residues asparagine 221, methionine 250, tyrosine 279, histidine 315, 335-337, 376-379, and glutamate 415; these read SRG and DGLR. Histidine 419 contributes to the Zn(2+) binding site. Position 442 (tyrosine 442) interacts with substrate. Histidine 483 is a binding site for Zn(2+). [4Fe-4S] cluster is bound by residues cysteine 563, cysteine 566, and cysteine 571.

Belongs to the ThiC family. Homodimer. [4Fe-4S] cluster serves as cofactor.

The enzyme catalyses 5-amino-1-(5-phospho-beta-D-ribosyl)imidazole + S-adenosyl-L-methionine = 4-amino-2-methyl-5-(phosphooxymethyl)pyrimidine + CO + 5'-deoxyadenosine + formate + L-methionine + 3 H(+). It functions in the pathway cofactor biosynthesis; thiamine diphosphate biosynthesis. Catalyzes the synthesis of the hydroxymethylpyrimidine phosphate (HMP-P) moiety of thiamine from aminoimidazole ribotide (AIR) in a radical S-adenosyl-L-methionine (SAM)-dependent reaction. This is Phosphomethylpyrimidine synthase from Bradyrhizobium sp. (strain ORS 278).